A 200-amino-acid polypeptide reads, in one-letter code: Imidazole glycerol phosphate synthase subunit HisH (200 aa).

Residues Lys-2–Arg-200 enclose the Glutamine amidotransferase type-1 domain. Residue Cys-79 is the Nucleophile of the active site. Residues His-179 and Glu-181 contribute to the active site.

Heterodimer of HisH and HisF.

It localises to the cytoplasm. The catalysed reaction is 5-[(5-phospho-1-deoxy-D-ribulos-1-ylimino)methylamino]-1-(5-phospho-beta-D-ribosyl)imidazole-4-carboxamide + L-glutamine = D-erythro-1-(imidazol-4-yl)glycerol 3-phosphate + 5-amino-1-(5-phospho-beta-D-ribosyl)imidazole-4-carboxamide + L-glutamate + H(+). It carries out the reaction L-glutamine + H2O = L-glutamate + NH4(+). It functions in the pathway amino-acid biosynthesis; L-histidine biosynthesis; L-histidine from 5-phospho-alpha-D-ribose 1-diphosphate: step 5/9. IGPS catalyzes the conversion of PRFAR and glutamine to IGP, AICAR and glutamate. The HisH subunit catalyzes the hydrolysis of glutamine to glutamate and ammonia as part of the synthesis of IGP and AICAR. The resulting ammonia molecule is channeled to the active site of HisF. This Methanopyrus kandleri (strain AV19 / DSM 6324 / JCM 9639 / NBRC 100938) protein is Imidazole glycerol phosphate synthase subunit HisH.